The chain runs to 156 residues: MATTINTSNKNTVKLLDILKIIFENNKTNTISEETLLSLYYIFDQTIFASLELIDKELITKYVFQPSNRYFYVVEGRKGAKYMCLIQGDYCSCPSFNFSVLLKSDSVYCKHQISSILAEIISNVKVIEFDDSEYQSQILSIESLSFKTPTHKFQQK.

The SWIM-type zinc-finger motif lies at 82-120 (YMCLIQGDYCSCPSFNFSVLLKSDSVYCKHQISSILAEI).

This sequence belongs to the SWS1 family.

Its subcellular location is the nucleus. In terms of biological role, may be involved in the homologous recombination repair (HRR) pathway of double-stranded DNA breaks arising during DNA replication or induced by DNA-damaging agents. This Dictyostelium discoideum (Social amoeba) protein is Zinc finger SWIM domain-containing protein 7 homolog (zswim7).